A 232-amino-acid polypeptide reads, in one-letter code: Sugar fermentation stimulation protein homolog (232 aa).

It belongs to the SfsA family.

The chain is Sugar fermentation stimulation protein homolog from Geobacter metallireducens (strain ATCC 53774 / DSM 7210 / GS-15).